The sequence spans 301 residues: Formylmethanofuran--tetrahydromethanopterin formyltransferase (301 aa).

It belongs to the FTR family. As to quaternary structure, homotetramer.

It localises to the cytoplasm. The catalysed reaction is N-formylmethanofuran + 5,6,7,8-tetrahydromethanopterin + H(+) = N(5)-formyl-5,6,7,8-tetrahydromethanopterin + methanofuran. Its pathway is one-carbon metabolism; methanogenesis from CO(2); 5,10-methenyl-5,6,7,8-tetrahydromethanopterin from CO(2): step 2/3. In terms of biological role, catalyzes the reversible transfer of a formyl group from formylmethanofuran (formyl-MFR) to tetrahydromethanopterin (H(4)MPT) to produce 5-formyl tetrahydromethanopterin (5-formyl-H(4)MPT) and methanofuran (MFR). This is Formylmethanofuran--tetrahydromethanopterin formyltransferase from Methanocaldococcus jannaschii (strain ATCC 43067 / DSM 2661 / JAL-1 / JCM 10045 / NBRC 100440) (Methanococcus jannaschii).